We begin with the raw amino-acid sequence, 214 residues long: Orotate phosphoribosyltransferase (214 aa).

Residue lysine 26 coordinates 5-phospho-alpha-D-ribose 1-diphosphate. 34-35 contributes to the orotate binding site; it reads FF. Residues 72–73, arginine 99, lysine 100, lysine 103, histidine 105, and 124–132 contribute to the 5-phospho-alpha-D-ribose 1-diphosphate site; these read YK and DDVITAGTA. Positions 128 and 157 each coordinate orotate.

The protein belongs to the purine/pyrimidine phosphoribosyltransferase family. PyrE subfamily. Homodimer. The cofactor is Mg(2+).

It catalyses the reaction orotidine 5'-phosphate + diphosphate = orotate + 5-phospho-alpha-D-ribose 1-diphosphate. It functions in the pathway pyrimidine metabolism; UMP biosynthesis via de novo pathway; UMP from orotate: step 1/2. Functionally, catalyzes the transfer of a ribosyl phosphate group from 5-phosphoribose 1-diphosphate to orotate, leading to the formation of orotidine monophosphate (OMP). This Pseudomonas fluorescens (strain SBW25) protein is Orotate phosphoribosyltransferase.